The sequence spans 35 residues: MEALVYTFLLVSTLGIIFFAIFFRDPPKVPNEGRK.

Residues 3 to 23 (ALVYTFLLVSTLGIIFFAIFF) form a helical membrane-spanning segment.

This sequence belongs to the PsbT family. PSII is composed of 1 copy each of membrane proteins PsbA, PsbB, PsbC, PsbD, PsbE, PsbF, PsbH, PsbI, PsbJ, PsbK, PsbL, PsbM, PsbT, PsbY, PsbZ, Psb30/Ycf12, at least 3 peripheral proteins of the oxygen-evolving complex and a large number of cofactors. It forms dimeric complexes.

Its subcellular location is the plastid. The protein localises to the chloroplast thylakoid membrane. Functionally, found at the monomer-monomer interface of the photosystem II (PS II) dimer, plays a role in assembly and dimerization of PSII. PSII is a light-driven water plastoquinone oxidoreductase, using light energy to abstract electrons from H(2)O, generating a proton gradient subsequently used for ATP formation. In Ginkgo biloba (Ginkgo), this protein is Photosystem II reaction center protein T.